Reading from the N-terminus, the 152-residue chain is Adrenodoxin-like protein 2, mitochondrial (152 aa).

A mitochondrion-targeting transit peptide spans 1–29; it reads MLVINSCRAASRLALRSLNLRSPIATRTF. Residues 41–146 enclose the 2Fe-2S ferredoxin-type domain; that stretch reads VNITFVRANG…GLEVHVPSTI (106 aa). 4 residues coordinate [2Fe-2S] cluster: Cys-80, Cys-86, Cys-89, and Cys-127.

Belongs to the adrenodoxin/putidaredoxin family. Requires [2Fe-2S] cluster as cofactor.

The protein resides in the mitochondrion. Its function is as follows. Required for ecdysteroidogenesis in the prothoracic gland which is necessary for larval to pupal transition. The protein is Adrenodoxin-like protein 2, mitochondrial of Drosophila melanogaster (Fruit fly).